Reading from the N-terminus, the 855-residue chain is MVFTVSCSKMSSIVDRDDSSIFDGLVEEDDKDKAKRVSRNKSEKKRRDQFNVLIKELGSMLPGNARKMDKSTVLQKSIDFLRKHKETTAQSDASEIRQDWKPTFLSNEEFTQLMLEALDGFFLAIMTDGSIIYVSESVTSLLEHLPSDLVDQSIFNFIPEGEHSEVYKILSTHLLESDSLTPEYLKSKNQLEFCCHMLRGTIDPKEPSTYEYVRFIGNFKSLTSVSTSTHNGFEGTIQRTHRPSYEDRVCFVATVRLATPQFIKEMCTVEEPNEEFTSRHSLEWKFLFLDHRAPPIIGYLPFEVLGTSGYDYYHVDDLENLAKCHEHLMQYGKGKSCYYRFLTKGQQWIWLQTHYYITYHQWNSRPEFIVCTHTVVSYAEVRAERRRELGIEESLPETAADKSQDSGSDNRINTVSLKEALERFDHSPTPSASSRSSRKSSHTAVSDPSSTPTKIPTDTSTPPRQHLPAHEKMTQRRSSFSSQSINSQSVGPSLTQPAMSQAANLPIPQGMSQFQFSAQLGAMQHLKDQLEQRTRMIEANIHRQQEELRKIQEQLQMVHGQGLQMFLQQSNPGLNFGSVQLSSGNSNIQQLTPVNMQGQVVPANQVQSGHISTGQHMIQQQTLQSTSTQQSQQSVMSGHSQQTSLPSQTPSTLTAPLYNTMVISQPAAGSMVQIPSSMPQNSTQSATVTTFTQDRQIRFSQGQQLVTKLVTAPVACGAVMVPSTMLMGQVVTAYPTFATQQQQAQTLSVTQQQQQQQQQPPQQQQQQQQSSQEQQLPSVQQPAQAQLGQPPQQFLQTSRLLHGNPSTQLILSAAFPLQQSTFPPSHHQQHQPQQQQQLPRHRTDSLTDPSKVQPQ.

Residues 32–47 (DKAKRVSRNKSEKKRR) carry the Nuclear localization signal motif. The bHLH domain occupies 34–84 (AKRVSRNKSEKKRRDQFNVLIKELGSMLPGNARKMDKSTVLQKSIDFLRKH). Phosphoserine occurs at positions 38 and 42. Lysine 67 participates in a covalent cross-link: Glycyl lysine isopeptide (Lys-Gly) (interchain with G-Cter in SUMO1). 2 consecutive PAS domains span residues 107–177 (NEEF…LLES) and 262–332 (FIKE…MQYG). Residues 336–379 (SCYYRFLTKGQQWIWLQTHYYITYHQWNSRPEFIVCTHTVVSYA) enclose the PAC domain. Residues 371–854 (CTHTVVSYAE…SLTDPSKVQP (484 aa)) form an interaction with NR3C1 region. Disordered stretches follow at residues 392–411 (EESL…SDNR) and 420–497 (ALER…LTQP). The residue at position 408 (serine 408) is a Phosphoserine. Residue serine 427 is modified to Phosphoserine; by GSK3-beta. Position 431 is a phosphoserine (serine 431). Residues 447 to 463 (DPSSTPTKIPTDTSTPP) are compositionally biased toward polar residues. The segment at 450-570 (STPTKIPTDT…QGLQMFLQQS (121 aa)) is interaction with SIRT1. Phosphothreonine; by CDK5 is present on residues threonine 451 and threonine 461. Over residues 478–493 (SSFSSQSINSQSVGPS) the composition is skewed to low complexity. The interval 514 to 564 (FQFSAQLGAMQHLKDQLEQRTRMIEANIHRQQEELRKIQEQLQMVHGQGLQ) is implicated in the circadian rhythmicity. 3 disordered regions span residues 613-650 (TGQH…SQTP), 752-791 (QQQQ…GQPP), and 814-855 (AFPL…VQPQ). Low complexity predominate over residues 619-650 (QQQTLQSTSTQQSQQSVMSGHSQQTSLPSQTP). Over residues 818–837 (QQSTFPPSHHQQHQPQQQQQ) the composition is skewed to low complexity. Polar residues predominate over residues 846 to 855 (LTDPSKVQPQ). Residue lysine 851 forms a Glycyl lysine isopeptide (Lys-Gly) (interchain with G-Cter in SUMO1) linkage.

In terms of assembly, component of the circadian clock oscillator which includes the CRY proteins, CLOCK or NPAS2, BMAL1 or BMAL2, CSNK1D and/or CSNK1E, TIMELESS and the PER proteins. Forms a heterodimer with BMAL1. The CLOCK-BMAL1 heterodimer is required for E-box-dependent transactivation, for CLOCK nuclear translocation and degradation, and for phosphorylation of both CLOCK and BMAL1. Interacts with NR3C1 in a ligand-dependent fashion. Interacts with ESR1 and estrogen stimulates this interaction. Interacts with the complex p35/CDK5. Interacts with RELA/p65. Interacts with KAT2B, CREBBP and EP300. Interacts with ID1 and ID3. Interacts with ID2. Interacts with MTA1. Interacts with OGA. Interacts with SIRT1. Interacts with CIPC. Interacts with EZH2. Interacts with EIF4E, PIWIL1 and DDX4. Interacts with PER1, PER2, CRY1 and CRY2 and this interaction requires a translocation to the nucleus. Interaction of the CLOCK-BMAL1 heterodimer with PER or CRY inhibits transcription activation. Interaction of the CLOCK-BMAL1 with CRY1 is independent of DNA but with PER2 is off DNA. The CLOCK-BMAL1 heterodimer interacts with GSK3B. Interacts with KDM5A. Interacts with KMT2A; in a circadian manner. Interacts with MYBBP1A. Interacts with THRAP3. Interacts with MED1; this interaction requires the presence of THRAP3. Interacts with NCOA2. The CLOCK-BMAL1 heterodimer interacts with PASD1. Interacts with NDUFA9. Interacts with IMPDH2; in a circadian manner. Interacts with ASS1; in a circadian manner. Interacts with PIWIL2 (via PIWI domain). Interacts with HNF4A. Post-translationally, ubiquitinated, leading to its proteasomal degradation. In terms of processing, O-glycosylated; contains O-GlcNAc. O-glycosylation by OGT prevents protein degradation by inhibiting ubiquitination. It also stabilizes the CLOCK-BMAL1 heterodimer thereby increasing CLOCK-BMAL1-mediated transcriptional activation of PER1/2/3 and CRY1/2. Phosphorylation is dependent on the CLOCK-BMAL1 heterodimer formation. Phosphorylation enhances the transcriptional activity, alters the subcellular localization and decreases the stability of the heterodimer by promoting its degradation. Phosphorylation shows circadian variations in the liver: the hyperphosphorylated form peaks at midnight (CT18), while the hypophosphorylated form is abundant throughout the day. May be phosphorylated by CSNK1D and CKSN1E. Post-translationally, sumoylation enhances its transcriptional activity and interaction with ESR1, resulting in up-regulation of ESR1 activity. Estrogen stimulates sumoylation. Desumoylation by SENP1 negatively regulates its transcriptional activity. In terms of processing, undergoes lysosome-mediated degradation in a time-dependent manner in the liver. As to expression, expressed equally in brain, eye, testes, ovaries, liver, heart, lung, kidney. In the brain, expression is abundant in the suprachiasmatic nuclei (SCN), in the pyriform cortex, and in the hippocampus. Low expression throughout the rest of the brain. Expression does not appear to undergo circadian oscillations.

It is found in the nucleus. Its subcellular location is the cytoplasm. The protein resides in the cytosol. It catalyses the reaction L-lysyl-[protein] + acetyl-CoA = N(6)-acetyl-L-lysyl-[protein] + CoA + H(+). Its function is as follows. Transcriptional activator which forms a core component of the circadian clock. The circadian clock, an internal time-keeping system, regulates various physiological processes through the generation of approximately 24 hour circadian rhythms in gene expression, which are translated into rhythms in metabolism and behavior. It is derived from the Latin roots 'circa' (about) and 'diem' (day) and acts as an important regulator of a wide array of physiological functions including metabolism, sleep, body temperature, blood pressure, endocrine, immune, cardiovascular, and renal function. Consists of two major components: the central clock, residing in the suprachiasmatic nucleus (SCN) of the brain, and the peripheral clocks that are present in nearly every tissue and organ system. Both the central and peripheral clocks can be reset by environmental cues, also known as Zeitgebers (German for 'timegivers'). The predominant Zeitgeber for the central clock is light, which is sensed by retina and signals directly to the SCN. The central clock entrains the peripheral clocks through neuronal and hormonal signals, body temperature and feeding-related cues, aligning all clocks with the external light/dark cycle. Circadian rhythms allow an organism to achieve temporal homeostasis with its environment at the molecular level by regulating gene expression to create a peak of protein expression once every 24 hours to control when a particular physiological process is most active with respect to the solar day. Transcription and translation of core clock components (CLOCK, NPAS2, BMAL1, BMAL2, PER1, PER2, PER3, CRY1 and CRY2) plays a critical role in rhythm generation, whereas delays imposed by post-translational modifications (PTMs) are important for determining the period (tau) of the rhythms (tau refers to the period of a rhythm and is the length, in time, of one complete cycle). A diurnal rhythm is synchronized with the day/night cycle, while the ultradian and infradian rhythms have a period shorter and longer than 24 hours, respectively. Disruptions in the circadian rhythms contribute to the pathology of cardiovascular diseases, cancer, metabolic syndromes and aging. A transcription/translation feedback loop (TTFL) forms the core of the molecular circadian clock mechanism. Transcription factors, CLOCK or NPAS2 and BMAL1 or BMAL2, form the positive limb of the feedback loop, act in the form of a heterodimer and activate the transcription of core clock genes and clock-controlled genes (involved in key metabolic processes), harboring E-box elements (5'-CACGTG-3') within their promoters. The core clock genes: PER1/2/3 and CRY1/2 which are transcriptional repressors form the negative limb of the feedback loop and interact with the CLOCK|NPAS2-BMAL1|BMAL2 heterodimer inhibiting its activity and thereby negatively regulating their own expression. This heterodimer also activates nuclear receptors NR1D1/2 and RORA/B/G, which form a second feedback loop and which activate and repress BMAL1 transcription, respectively. Regulates the circadian expression of ICAM1, VCAM1, CCL2, THPO and MPL and also acts as an enhancer of the transactivation potential of NF-kappaB. Plays an important role in the homeostatic regulation of sleep. The CLOCK-BMAL1 heterodimer regulates the circadian expression of SERPINE1/PAI1, VWF, B3, CCRN4L/NOC, NAMPT, DBP, MYOD1, PPARGC1A, PPARGC1B, SIRT1, GYS2, F7, NGFR, GNRHR, BHLHE40/DEC1, ATF4, MTA1, KLF10 and also genes implicated in glucose and lipid metabolism. Promotes rhythmic chromatin opening, regulating the DNA accessibility of other transcription factors. May play a role in spermatogenesis; contributes to the chromatoid body assembly and physiology. The CLOCK-BMAL2 heterodimer activates the transcription of SERPINE1/PAI1 and BHLHE40/DEC1. The preferred binding motif for the CLOCK-BMAL1 heterodimer is 5'-CACGTGA-3', which contains a flanking adenine nucleotide at the 3-prime end of the canonical 6-nucleotide E-box sequence. CLOCK specifically binds to the half-site 5'-CAC-3', while BMAL1 binds to the half-site 5'-GTGA-3'. The CLOCK-BMAL1 heterodimer also recognizes the non-canonical E-box motifs 5'-AACGTGA-3' and 5'-CATGTGA-3'. CLOCK has an intrinsic acetyltransferase activity, which enables circadian chromatin remodeling by acetylating histones and nonhistone proteins, including its own partner BMAL1. Represses glucocorticoid receptor NR3C1/GR-induced transcriptional activity by reducing the association of NR3C1/GR to glucocorticoid response elements (GREs) via the acetylation of multiple lysine residues located in its hinge region. The acetyltransferase activity of CLOCK is as important as its transcription activity in circadian control. Acetylates metabolic enzymes IMPDH2 and NDUFA9 in a circadian manner. Facilitated by BMAL1, rhythmically interacts and acetylates argininosuccinate synthase 1 (ASS1) leading to enzymatic inhibition of ASS1 as well as the circadian oscillation of arginine biosynthesis and subsequent ureagenesis. Drives the circadian rhythm of blood pressure through transcriptional activation of ATP1B1. This is Circadian locomoter output cycles protein kaput (Clock) from Mus musculus (Mouse).